Reading from the N-terminus, the 999-residue chain is Sarcoplasmic/endoplasmic reticulum calcium ATPase 3 (999 aa).

Met-1 carries the N-acetylmethionine modification. Residues 1-48 (MEAAHLLPAADVLRHFSVTAEGGLSPAQVTGARERYGPNELPSEEGKS) are Cytoplasmic-facing. Phosphoserine is present on Ser-17. A Phosphothreonine modification is found at Thr-19. Ser-25 is modified (phosphoserine). Residues 49 to 69 (LWELVLEQFEDLLVRILLLAA) form a helical membrane-spanning segment. The Lumenal segment spans residues 70 to 89 (LVSFVLAWFEEGEETTTAFV). Residues 90-110 (EPLVIMLILVANAIVGVWQER) traverse the membrane as a helical segment. The Cytoplasmic segment spans residues 111 to 253 (NAESAIEALK…PERTPLQRKL (143 aa)). Residues 254 to 273 (DEFGRQLSHAISVICVAVWV) form a helical membrane-spanning segment. Topologically, residues 274–295 (INIGHFADPAHGGSWLRGAVYY) are lumenal. The chain crosses the membrane as a helical span at residues 296–313 (FKIAVALAVAAIPEGLPA). Positions 304, 305, 307, and 309 each coordinate Ca(2+). Residues 314 to 757 (VITTCLALGT…EEGRAIYSNM (444 aa)) lie on the Cytoplasmic side of the membrane. Catalysis depends on Asp-351, which acts as the 4-aspartylphosphate intermediate. Positions 351 and 353 each coordinate Mg(2+). Thr-353 is a binding site for ATP. Positions 370–400 (AEADAGSCLLHEFTISGTTYTPEGEVRQGDQ) are interaction with phospholamban 1. The residue at position 415 (Thr-415) is a Phosphothreonine. ATP-binding residues include Glu-442, Arg-489, Lys-515, Arg-560, Thr-625, Gly-626, and Asp-627. Ser-662 bears the Phosphoserine mark. Positions 678 and 684 each coordinate ATP. Mg(2+) is bound at residue Asp-703. Asn-706 serves as a coordination point for ATP. The chain crosses the membrane as a helical span at residues 758–777 (KQFIRYLISSNVGEVVCIFL). Residues Asn-768 and Glu-771 each coordinate Ca(2+). Residues 778–787 (TAILGLPEAL) are Lumenal-facing. Residues 788–808 (IPVQLLWVNLVTDGLPATALG) traverse the membrane as a helical segment. The tract at residues 788 to 808 (IPVQLLWVNLVTDGLPATALG) is interaction with phospholamban 2. Ca(2+) is bound by residues Asn-796, Thr-799, and Asp-800. The Cytoplasmic segment spans residues 809 to 828 (FNPPDLDIMEKLPRSPREAL). The chain crosses the membrane as a helical span at residues 829–851 (ISGWLFFRYLAIGVYVGLATVAA). Over 852-897 (ATWWFVYDAEGPHINFYQLRNFLKCSEDNPLFAGIDCEVFESRFPT) the chain is Lumenal. The chain crosses the membrane as a helical span at residues 898-917 (TMALSVLVTIEMCNALNSVS). Glu-908 contributes to the Ca(2+) binding site. Residues 918–930 (ENQSLLRMPPWMN) lie on the Cytoplasmic side of the membrane. The helical transmembrane segment at 931–949 (PWLLVAVAMSMALHFLILL) threads the bilayer. Over 950–964 (VPPLPLIFQVTPLSG) the chain is Lumenal. Residues 965–985 (RQWVVVLQISLPVILLDEALK) traverse the membrane as a helical segment. Topologically, residues 986 to 999 (YLSRNHMHEEMSQK) are cytoplasmic.

Belongs to the cation transport ATPase (P-type) (TC 3.A.3) family. Type IIA subfamily. In terms of assembly, interacts with sarcolipin (SLN). Interacts with phospholamban (PLN). Interacts with myoregulin (MRLN). Interacts with DWORF. Interacts with VMP1. Interacts with TUNAR; the interaction occurs at low levels in low glucose conditions and is increased by high glucose levels. Requires Mg(2+) as cofactor. As to expression, found in most tissues. Most abundant in thymus, trachea, salivary gland, spleen, bone marrow, lymph node, peripheral leukocytes, pancreas and colon. Also detected in fetal tissues. Expressed in cell lineages of hematopoietic, epithelial, or embryonic origin and also expressed in several cancer cell lines.

The protein localises to the nucleus membrane. The protein resides in the endoplasmic reticulum membrane. It is found in the sarcoplasmic reticulum membrane. The catalysed reaction is Ca(2+)(in) + ATP + H2O = Ca(2+)(out) + ADP + phosphate + H(+). With respect to regulation, inhibited by sarcolipin (SLN), phospholamban (PLN) and myoregulin (MRLN). Enhanced by DWORF; DWORF increases activity by displacing sarcolipin (SLN), phospholamban (PLN) and myoregulin (MRLN). In terms of biological role, this magnesium-dependent enzyme catalyzes the hydrolysis of ATP coupled with the transport of calcium. Transports calcium ions from the cytosol into the sarcoplasmic/endoplasmic reticulum lumen. Contributes to calcium sequestration involved in muscular excitation/contraction. The sequence is that of Sarcoplasmic/endoplasmic reticulum calcium ATPase 3 from Homo sapiens (Human).